Reading from the N-terminus, the 228-residue chain is UPF0173 metal-dependent hydrolase RBAM_026340 (228 aa).

It belongs to the UPF0173 family.

This chain is UPF0173 metal-dependent hydrolase RBAM_026340, found in Bacillus velezensis (strain DSM 23117 / BGSC 10A6 / LMG 26770 / FZB42) (Bacillus amyloliquefaciens subsp. plantarum).